We begin with the raw amino-acid sequence, 549 residues long: Cell death protein 4 (549 aa).

One can recognise a CARD domain in the interval 1-91 (MLCEIECRAL…HLADFLEDYI (91 aa)). Positions 131, 162, 164, 165, 166, 167, 273, 367, and 369 each coordinate ATP. An NB-ARC domain is found at 133–417 (REYHVDRVIK…KLWSCVIPVD (285 aa)). Residue S166 participates in Mg(2+) binding.

Associates as an asymmetric homodimer with ced-9. Only one ced-4 molecule within the dimer interacts directly with ced-9. Upon release from ced-9, forms a multimer, known as the apoptosome, and interacts with ced-3; the interaction results in ced-3 autoproteolytic cleavage and activation. Multiple oligomeric states of the apoptosome are observed including hexamers, heptamers and octamers. The hexamers likely represent a pre-mature state of the apoptosome and may contribute to the regulation of ced-3 activation. The apoptosome multimer also interacts with two processed ced-3 to form a stable holoenzyme. Interacts with sex-determining protein fem-1. May form a complex composed of ced-3, ced-4 and mac-1 or of ced-9, ced-4 and mac-1. Within the complex, interacts with mac-1.

The protein localises to the mitochondrion. It localises to the cytoplasm. Its subcellular location is the perinuclear region. Functionally, component of the egl-1, ced-9, ced-4 and ced-3 apoptotic signaling cascade required for the initiation of programmed cell death in cells fated to die during embryonic and postembryonic development. During oogenesis, required for germline apoptosis downstream of ced-9 and upstream of ced-3 but independently of egl-1. May regulate germline apoptosis in response to DNA damage, probably downstream of let-60/ras and mpk-1 pathway. Regulates CEP neuron apoptosis in response to high Al(3+) levels. During male tail morphogenesis, promotes apoptosis of the tail-spike cell upstream of ced-3 but independently of egl-1 and ced-9. May play a role in sex-specific cell apoptosis, probably by promoting ced-3-mediated cleavage of sex-determining protein fem-1. During larval development, required for the elimination of transient presynaptic components downstream of egl-1 and ced-9 and upstream of ced-3 apoptotic pathway. Downstream of calreticulin crt-1 and upstream of ced-3 and independently of egl-1 and ced-9, plays a role in the initial steps of axonal regrowth following axotomy. Together with ain-1, a component of the miRNA-induced-silencing complex (miRISC), and probably upstream of ced-3, regulates temporal cell fate patterning during larval development. May play a role in resistance to S.typhimurium-mediated infection. In terms of biological role, plays a major role in programmed cell death. egl-1 binds to and directly inhibits the activity of ced-9, releasing the cell death activator ced-4 from a ced-9/ced-4-containing protein complex and allowing ced-4 to induce caspase ced-3 autoproteolytic cleavage and activation. Also forms a holoenzyme with processed ced-3 enhancing ced-3 activity. Prevents programmed cell death. This chain is Cell death protein 4 (ced-4), found in Caenorhabditis elegans.